Reading from the N-terminus, the 122-residue chain is Large ribosomal subunit protein uL14 (122 aa).

The protein belongs to the universal ribosomal protein uL14 family. In terms of assembly, part of the 50S ribosomal subunit. Forms a cluster with proteins L3 and L19. In the 70S ribosome, L14 and L19 interact and together make contacts with the 16S rRNA in bridges B5 and B8.

Its function is as follows. Binds to 23S rRNA. Forms part of two intersubunit bridges in the 70S ribosome. This is Large ribosomal subunit protein uL14 from Prosthecochloris aestuarii (strain DSM 271 / SK 413).